Consider the following 373-residue polypeptide: Beta sliding clamp homolog GriR (373 aa).

Belongs to the beta sliding clamp family. Forms a ring-shaped head-to-tail homodimer around DNA which binds and tethers DNA polymerases and other proteins to the DNA. The DNA replisome complex has a single clamp-loading complex (3 tau and 1 each of delta, delta', psi and chi subunits) which binds 3 Pol III cores (1 core on the leading strand and 2 on the lagging strand) each with a beta sliding clamp dimer. Additional proteins in the replisome are other copies of gamma, psi and chi, Ssb, DNA helicase and RNA primase.

It is found in the cytoplasm. Functionally, a homolog of the beta sliding clamp protein encoded within the biosynthetic cluster for griselimycin synthesis. Upon expression in S.coelicolor A3(2), which is susceptible to this antibiotic, confers resistance to griselimycin. The beta sliding clamp confers DNA tethering and processivity to DNA polymerases and other proteins. Acts as a clamp, forming a ring around DNA (a reaction catalyzed by the clamp-loading complex) which diffuses in an ATP-independent manner freely and bidirectionally along dsDNA. Initially characterized for its ability to contact the catalytic subunit of DNA polymerase III (Pol III), a complex, multichain enzyme responsible for most of the replicative synthesis in bacteria; Pol III exhibits 3'-5' exonuclease proofreading activity. The beta chain is required for initiation of replication as well as for processivity of DNA replication. This Streptomyces muensis protein is Beta sliding clamp homolog GriR.